The sequence spans 351 residues: L-threonine 3-dehydrogenase (351 aa).

A Zn(2+)-binding site is contributed by cysteine 39. Active-site charge relay system residues include threonine 41 and histidine 44. The Zn(2+) site is built by histidine 64, glutamate 65, cysteine 94, cysteine 97, cysteine 100, and cysteine 108. Residues isoleucine 176, aspartate 196, arginine 201, 271 to 273 (LGI), and 295 to 296 (IY) each bind NAD(+).

This sequence belongs to the zinc-containing alcohol dehydrogenase family. As to quaternary structure, homotetramer. The cofactor is Zn(2+).

The protein resides in the cytoplasm. The catalysed reaction is L-threonine + NAD(+) = (2S)-2-amino-3-oxobutanoate + NADH + H(+). Its pathway is amino-acid degradation; L-threonine degradation via oxydo-reductase pathway; glycine from L-threonine: step 1/2. Functionally, catalyzes the NAD(+)-dependent oxidation of L-threonine to 2-amino-3-ketobutyrate. The chain is L-threonine 3-dehydrogenase from Francisella tularensis subsp. holarctica (strain OSU18).